Consider the following 413-residue polypeptide: Probable protein phosphatase 2C 78 (413 aa).

Residues 21-40 (KKATTTTRRRERSSSQAARR) are disordered. The region spanning 111–409 (KYGVASVCGR…DNVSVVVVDL (299 aa)) is the PPM-type phosphatase domain. Positions 153, 154, 327, and 400 each coordinate Mn(2+).

Belongs to the PP2C family. Mg(2+) serves as cofactor. Requires Mn(2+) as cofactor.

Its subcellular location is the golgi apparatus. The protein localises to the nucleus. It carries out the reaction O-phospho-L-seryl-[protein] + H2O = L-seryl-[protein] + phosphate. It catalyses the reaction O-phospho-L-threonyl-[protein] + H2O = L-threonyl-[protein] + phosphate. Its function is as follows. Acts as a negative regulator of abscisic acid (ABA) signaling for stomatal closure in leaves, and controls water loss during leaf senescence. Activated by the NAC029/NAP transcription factor during ABA signaling in senescing leaves. Functions as a negative regulator of osmotic stress and ABA signaling. Acts as a negative regulator of response to drought. The sequence is that of Probable protein phosphatase 2C 78 from Arabidopsis thaliana (Mouse-ear cress).